We begin with the raw amino-acid sequence, 1417 residues long: DNA-directed RNA polymerase subunit beta' (1417 aa).

The Zn(2+) site is built by Cys68, Cys70, Cys83, and Cys86. Mg(2+) contacts are provided by Asp458, Asp460, and Asp462. The Zn(2+) site is built by Cys811, Cys884, Cys891, and Cys894.

It belongs to the RNA polymerase beta' chain family. The RNAP catalytic core consists of 2 alpha, 1 beta, 1 beta' and 1 omega subunit. When a sigma factor is associated with the core the holoenzyme is formed, which can initiate transcription. The cofactor is Mg(2+). Requires Zn(2+) as cofactor.

The enzyme catalyses RNA(n) + a ribonucleoside 5'-triphosphate = RNA(n+1) + diphosphate. Its function is as follows. DNA-dependent RNA polymerase catalyzes the transcription of DNA into RNA using the four ribonucleoside triphosphates as substrates. In Francisella tularensis subsp. novicida (strain U112), this protein is DNA-directed RNA polymerase subunit beta'.